Reading from the N-terminus, the 925-residue chain is Bifunctional uridylyltransferase/uridylyl-removing enzyme (925 aa).

Residues 1–382 are uridylyltransferase; that stretch reads MVLPTTKDAT…PPGAEVRRVP (382 aa). The tract at residues 383–738 is uridylyl-removing; the sequence is DSDDFIIDNN…VGFDEARGVT (356 aa). In terms of domain architecture, HD spans 498–621; the sequence is VDEHLIRCIG…VQSVERMKLL (124 aa). ACT domains follow at residues 739-820 and 849-925; these read ELTI…DVMP and MIEV…NTAE.

This sequence belongs to the GlnD family. Mg(2+) serves as cofactor.

The enzyme catalyses [protein-PII]-L-tyrosine + UTP = [protein-PII]-uridylyl-L-tyrosine + diphosphate. It carries out the reaction [protein-PII]-uridylyl-L-tyrosine + H2O = [protein-PII]-L-tyrosine + UMP + H(+). Its activity is regulated as follows. Uridylyltransferase (UTase) activity is inhibited by glutamine, while glutamine activates uridylyl-removing (UR) activity. Modifies, by uridylylation and deuridylylation, the PII regulatory proteins (GlnB and homologs), in response to the nitrogen status of the cell that GlnD senses through the glutamine level. Under low glutamine levels, catalyzes the conversion of the PII proteins and UTP to PII-UMP and PPi, while under higher glutamine levels, GlnD hydrolyzes PII-UMP to PII and UMP (deuridylylation). Thus, controls uridylylation state and activity of the PII proteins, and plays an important role in the regulation of nitrogen assimilation and metabolism. This is Bifunctional uridylyltransferase/uridylyl-removing enzyme from Nitrobacter winogradskyi (strain ATCC 25391 / DSM 10237 / CIP 104748 / NCIMB 11846 / Nb-255).